The primary structure comprises 481 residues: Glutamyl-tRNA(Gln) amidotransferase subunit A (481 aa).

Catalysis depends on charge relay system residues lysine 76 and serine 151. The active-site Acyl-ester intermediate is the serine 175.

Belongs to the amidase family. GatA subfamily. As to quaternary structure, heterotrimer of A, B and C subunits.

The enzyme catalyses L-glutamyl-tRNA(Gln) + L-glutamine + ATP + H2O = L-glutaminyl-tRNA(Gln) + L-glutamate + ADP + phosphate + H(+). Its function is as follows. Allows the formation of correctly charged Gln-tRNA(Gln) through the transamidation of misacylated Glu-tRNA(Gln) in organisms which lack glutaminyl-tRNA synthetase. The reaction takes place in the presence of glutamine and ATP through an activated gamma-phospho-Glu-tRNA(Gln). The sequence is that of Glutamyl-tRNA(Gln) amidotransferase subunit A from Neisseria meningitidis serogroup C / serotype 2a (strain ATCC 700532 / DSM 15464 / FAM18).